Reading from the N-terminus, the 327-residue chain is tRNA uridine(34) hydroxylase (327 aa).

Positions 130 to 224 (LDEDTVVLDT…YGKDPEVQGE (95 aa)) constitute a Rhodanese domain. Catalysis depends on C184, which acts as the Cysteine persulfide intermediate.

This sequence belongs to the TrhO family.

The catalysed reaction is uridine(34) in tRNA + AH2 + O2 = 5-hydroxyuridine(34) in tRNA + A + H2O. Functionally, catalyzes oxygen-dependent 5-hydroxyuridine (ho5U) modification at position 34 in tRNAs. This is tRNA uridine(34) hydroxylase from Streptococcus thermophilus (strain ATCC BAA-250 / LMG 18311).